A 263-amino-acid chain; its full sequence is uncharacterized protein (263 aa).

Residue 31 to 38 (GPTGSGKT) coordinates ATP.

It belongs to the CbbQ/NirQ/NorQ/GpvN family.

This is an uncharacterized protein from Staphylococcus aureus (strain bovine RF122 / ET3-1).